Here is a 232-residue protein sequence, read N- to C-terminus: Lipopolysaccharide core heptose(II) kinase WaaY (232 aa).

The protein belongs to the protein kinase superfamily. RfaY/WaaY family.

The catalysed reaction is alpha-D-Glc-(1-&gt;3)-[L-alpha-D-Hep-(1-&gt;7)]-L-alpha-D-Hep-(1-&gt;3)-4-O-PO3(2-)-L-alpha-D-Hep-(1-&gt;5)-[alpha-Kdo-(2-&gt;4)]-alpha-Kdo-(2-&gt;6)-lipid A + ATP = alpha-D-Glc-(1-&gt;3)-[L-alpha-D-Hep-(1-&gt;7)]-4-O-PO3(2-)-L-alpha-D-Hep-(1-&gt;3)-4-O-PO3(2-)-L-alpha-D-Hep-(1-&gt;5)-[alpha-Kdo-(2-&gt;4)]-alpha-Kdo-(2-&gt;6)-lipid A + ADP + H(+). Its pathway is bacterial outer membrane biogenesis; LPS core biosynthesis. In terms of biological role, kinase involved in the biosynthesis of the core oligosaccharide region of lipopolysaccharide (LPS). Catalyzes the phosphorylation of the second heptose unit (HepII) of the inner core. The sequence is that of Lipopolysaccharide core heptose(II) kinase WaaY from Salmonella typhimurium (strain LT2 / SGSC1412 / ATCC 700720).